A 67-amino-acid chain; its full sequence is Penaeidin-4d (67 aa).

An N-terminal signal peptide occupies residues 1 to 19 (MRLLVCLVFLASFAMVCQG). Intrachain disulfides connect C42–C56, C45–C63, and C57–C64. L66 carries the post-translational modification Leucine amide.

It belongs to the penaeidin family.

The protein localises to the cytoplasmic granule. Antibacterial and antifungal activity. Presents chitin-binding activity. This Penaeus setiferus (Atlantic white shrimp) protein is Penaeidin-4d.